The following is a 334-amino-acid chain: L-lactate dehydrogenase A chain (334 aa).

NAD(+)-binding positions include 30–58 and Arg-100; that span reads GQVG…LEDK. Substrate-binding residues include Arg-107, Asn-139, and Arg-170. Residue Asn-139 participates in NAD(+) binding. Catalysis depends on His-194, which acts as the Proton acceptor. Residue Thr-249 coordinates substrate.

It belongs to the LDH/MDH superfamily. LDH family. In terms of assembly, homotetramer.

Its subcellular location is the cytoplasm. The enzyme catalyses (S)-lactate + NAD(+) = pyruvate + NADH + H(+). It participates in fermentation; pyruvate fermentation to lactate; (S)-lactate from pyruvate: step 1/1. Its function is as follows. Interconverts simultaneously and stereospecifically pyruvate and lactate with concomitant interconversion of NADH and NAD(+). In Xenopus laevis (African clawed frog), this protein is L-lactate dehydrogenase A chain (ldha).